The chain runs to 274 residues: MAARPLWKGQITFGLVNVPVSLYPAVGKTEIHFHLLDSRNMARVRYERVNEETGEEVPWNEIVKAYEYNGGDYVIVEEKELKKAAPESTQSIEIESFIPRRELDCVYFDKPYYLVPVKNGEKGYVILREVLKKTKTVGIARIVIRSKQYLAAVFPYQKGIMVNLLRFAQEFRKTDELNLPTQDIKKYKITPKELSIAEQLVNAMLTQWKPEKYHDEFRAKIMKWVEAKIKTGKTISIEKEEAAPVSTNVVDFMQLLKKSIQEKEKTKKHASGSR.

Residues Ile11–Ser195 form the Ku domain.

This sequence belongs to the prokaryotic Ku family. Homodimer. Interacts with LigD.

Its function is as follows. With LigD forms a non-homologous end joining (NHEJ) DNA repair enzyme, which repairs dsDNA breaks with reduced fidelity. Binds linear dsDNA with 5'- and 3'- overhangs but not closed circular dsDNA nor ssDNA. Recruits and stimulates the ligase activity of LigD. In Coxiella burnetii (strain RSA 331 / Henzerling II), this protein is Non-homologous end joining protein Ku.